A 294-amino-acid chain; its full sequence is MSKVKVAILGSGNIGTDLMMKLERSNILQLTAMIGIDPESDGLRRAKEKGYTVISTGIKGFLEQPELADIVFDATSAKAHIRHAKLLKEAGKTVLDLTPAAVGALVVPPVNLHKHLDEWNVNLITCGGQATIPIVHAINRVHPVGYAEIVATIASKSAGPGTRANIDEFTQTTARGIEKIGGAKKGKAIIILNPAEPPIMMRNTVYALVEEGKIDENAIVQSILEMVKTVQSYVPGYRIRTEPIMDGNKITVFLEVEGAGDYLPKYSGNLDIMTAAAVKVAEELAKHKLAAQTA.

Residue 11–14 coordinates NAD(+); the sequence is SGNI. Catalysis depends on Cys126, which acts as the Acyl-thioester intermediate. NAD(+)-binding positions include 157–165 and Asn269; that span reads SAGPGTRAN.

Belongs to the acetaldehyde dehydrogenase family.

The catalysed reaction is acetaldehyde + NAD(+) + CoA = acetyl-CoA + NADH + H(+). The chain is Acetaldehyde dehydrogenase (pheF) from Geobacillus stearothermophilus (Bacillus stearothermophilus).